A 167-amino-acid polypeptide reads, in one-letter code: Lipoprotein signal peptidase (167 aa).

The next 4 membrane-spanning stretches (helical) occupy residues 8-28 (TFLT…VVLL), 46-66 (WGHF…FGLF), 68-88 (QYKI…ALFL), and 101-121 (IALT…LLHG). Catalysis depends on residues Asp-125 and Asp-143. A helical membrane pass occupies residues 139-159 (FNLADAFISIGTLLLIGHLYF).

This sequence belongs to the peptidase A8 family.

It is found in the cell inner membrane. The catalysed reaction is Release of signal peptides from bacterial membrane prolipoproteins. Hydrolyzes -Xaa-Yaa-Zaa-|-(S,diacylglyceryl)Cys-, in which Xaa is hydrophobic (preferably Leu), and Yaa (Ala or Ser) and Zaa (Gly or Ala) have small, neutral side chains.. The protein operates within protein modification; lipoprotein biosynthesis (signal peptide cleavage). Functionally, this protein specifically catalyzes the removal of signal peptides from prolipoproteins. In Chlamydia trachomatis serovar L2b (strain UCH-1/proctitis), this protein is Lipoprotein signal peptidase.